We begin with the raw amino-acid sequence, 714 residues long: Fatty acid oxidation complex subunit alpha (714 aa).

Residues 1 to 190 (MEMASAFTLN…KLGLVDDVVP (190 aa)) form an enoyl-CoA hydratase region. The 3-hydroxyacyl-CoA dehydrogenase stretch occupies residues 306–714 (APLNSVGILG…FWKTTATDLQ (409 aa)).

This sequence in the N-terminal section; belongs to the enoyl-CoA hydratase/isomerase family. The protein in the central section; belongs to the 3-hydroxyacyl-CoA dehydrogenase family. In terms of assembly, heterotetramer of two alpha chains (FadJ) and two beta chains (FadI).

Its subcellular location is the cytoplasm. The catalysed reaction is a (3S)-3-hydroxyacyl-CoA = a (2E)-enoyl-CoA + H2O. It catalyses the reaction a 4-saturated-(3S)-3-hydroxyacyl-CoA = a (3E)-enoyl-CoA + H2O. The enzyme catalyses a (3S)-3-hydroxyacyl-CoA + NAD(+) = a 3-oxoacyl-CoA + NADH + H(+). It carries out the reaction (3S)-3-hydroxybutanoyl-CoA = (3R)-3-hydroxybutanoyl-CoA. Its pathway is lipid metabolism; fatty acid beta-oxidation. Catalyzes the formation of a hydroxyacyl-CoA by addition of water on enoyl-CoA. Also exhibits 3-hydroxyacyl-CoA epimerase and 3-hydroxyacyl-CoA dehydrogenase activities. This chain is Fatty acid oxidation complex subunit alpha, found in Escherichia coli O45:K1 (strain S88 / ExPEC).